The primary structure comprises 381 residues: Probable glucuronosyltransferase Os04g0103100 (381 aa).

The Cytoplasmic segment spans residues 1–69; that stretch reads MASIRRPHSP…HTSFRRPLPR (69 aa). The tract at residues 21–50 is disordered; sequence HLGPFASSSPPSSPLRHSSSSSSPRSAAHH. Residues 26–46 are compositionally biased toward low complexity; sequence ASSSPPSSPLRHSSSSSSPRS. A helical; Signal-anchor for type II membrane protein transmembrane segment spans residues 70–90; that stretch reads FAAFFLLGSFLGLLHFLSHLP. The Lumenal portion of the chain corresponds to 91–381; that stretch reads RPLGPIPNPN…TDLDVIIPLK (291 aa). Residues 96–122 form a disordered region; it reads IPNPNSHHRHRDPFPILQHPHPPSTPH. 2 N-linked (GlcNAc...) asparagine glycosylation sites follow: Asn-194 and Asn-296.

It belongs to the glycosyltransferase 43 family.

Its subcellular location is the golgi apparatus membrane. In terms of biological role, involved in the synthesis of glucuronoxylan hemicellulose in secondary cell walls. The polypeptide is Probable glucuronosyltransferase Os04g0103100 (Oryza sativa subsp. japonica (Rice)).